The sequence spans 333 residues: Phosphoribosylformylglycinamidine cyclo-ligase (333 aa).

This sequence belongs to the AIR synthase family.

It localises to the cytoplasm. The catalysed reaction is 2-formamido-N(1)-(5-O-phospho-beta-D-ribosyl)acetamidine + ATP = 5-amino-1-(5-phospho-beta-D-ribosyl)imidazole + ADP + phosphate + H(+). Its pathway is purine metabolism; IMP biosynthesis via de novo pathway; 5-amino-1-(5-phospho-D-ribosyl)imidazole from N(2)-formyl-N(1)-(5-phospho-D-ribosyl)glycinamide: step 2/2. This chain is Phosphoribosylformylglycinamidine cyclo-ligase, found in Clostridium perfringens (strain 13 / Type A).